The primary structure comprises 371 residues: 4-hydroxybutyrate dehydrogenase (371 aa).

NAD(+)-binding positions include 88–92, 126–130, and Lys-148; these read GSVID and TTCGT. 4 residues coordinate Fe cation: Asp-182, His-186, His-253, and His-267. Residue His-267 coordinates NAD(+).

Belongs to the iron-containing alcohol dehydrogenase family. In terms of assembly, homodimer. Fe(2+) serves as cofactor. Requires Cu(2+) as cofactor.

It catalyses the reaction 4-hydroxybutanoate + NAD(+) = succinate semialdehyde + NADH + H(+). With respect to regulation, inactivated by oxygen. Involved in the anaerobic succinate degradation pathway. Catalyzes the interconversion of gamma-hydroxybutyrate (GHB) and succinic semialdehyde (SSA). This Clostridium kluyveri (strain ATCC 8527 / DSM 555 / NBRC 12016 / NCIMB 10680 / K1) protein is 4-hydroxybutyrate dehydrogenase.